A 234-amino-acid polypeptide reads, in one-letter code: Small ribosomal subunit protein eS1y (234 aa).

Residues 1 to 18 (MAVGKNKRISKGKKGGKK) show a composition bias toward basic residues. The segment at 1–20 (MAVGKNKRISKGKKGGKKKA) is disordered.

It belongs to the eukaryotic ribosomal protein eS1 family. As to quaternary structure, component of the small ribosomal subunit. Mature ribosomes consist of a small (40S) and a large (60S) subunit. The 40S subunit contains about 33 different proteins and 1 molecule of RNA (18S). The 60S subunit contains about 49 different proteins and 3 molecules of RNA (25S, 5.8S and 5S).

The protein localises to the cytoplasm. The protein is Small ribosomal subunit protein eS1y of Vitis vinifera (Grape).